Reading from the N-terminus, the 1137-residue chain is 2'-5'-oligoadenylate synthase 3 (1137 aa).

Met-1 bears the N-acetylmethionine mark. The segment at 6–341 (TPAGALDKLV…GALVQPWEGP (336 aa)) is OAS domain 1. Interaction with dsRNA regions lie at residues 12–56 (DKLV…VIRI) and 185–199 (ELRKNFVNIRPVKLK). The segment at 342-461 (GLPCAGILDL…GSQMGPDLSQ (120 aa)) is linker. The segment covering 434–453 (QSTASSNTPPGHSSMSTAGS) has biased composition (polar residues). Residues 434 to 462 (QSTASSNTPPGHSSMSTAGSQMGPDLSQI) are disordered. OAS domain regions lie at residues 462 to 792 (IPSK…PWDV) and 800 to 1134 (TPAQ…WPVK). Ser-854 provides a ligand contact to ATP. Positions 866, 868, and 938 each coordinate Mg(2+). ATP-binding residues include Arg-997, Lys-1000, and Gln-1019.

It belongs to the 2-5A synthase family. As to quaternary structure, monomer. Mg(2+) serves as cofactor.

The protein localises to the cytoplasm. It localises to the nucleus. It catalyses the reaction 3 ATP = 5'-triphosphoadenylyl-(2'-&gt;5')-adenylyl-(2'-&gt;5')-adenosine + 2 diphosphate. Produced as a latent enzyme which is activated by dsRNA generated during the course of viral infection. Strongly activated by long dsRNAs at least 50 nucleotides in length. ssRNA does not activate the enzyme. Interferon-induced, dsRNA-activated antiviral enzyme which plays a critical role in cellular innate antiviral response. In addition, it may also play a role in other cellular processes such as apoptosis, cell growth, differentiation and gene regulation. Synthesizes preferentially dimers of 2'-5'-oligoadenylates (2-5A) from ATP which then bind to the inactive monomeric form of ribonuclease L (RNase L) leading to its dimerization and subsequent activation. Activation of RNase L leads to degradation of cellular as well as viral RNA, resulting in the inhibition of protein synthesis, thus terminating viral replication. Can mediate the antiviral effect via the classical RNase L-dependent pathway or an alternative antiviral pathway independent of RNase L. The chain is 2'-5'-oligoadenylate synthase 3 (Oas3) from Rattus norvegicus (Rat).